The primary structure comprises 1167 residues: Outer membrane protein SlpA (1167 aa).

An N-terminal signal peptide occupies residues 1–22; that stretch reads MKKSLIALTTALSFGLAAAQTA. Topologically, residues 23–254 are periplasmic; the sequence is APVSAPQVPA…RIAALERNAF (232 aa). An SLH domain is found at 29 to 92; the sequence is QVPALTDVPA…DQMRDGETPA (64 aa). A beta stranded transmembrane segment spans residues 255–268; it reads SVKPSLTIGYSVSR. The Extracellular segment spans residues 269–377; the sequence is TSRNFDVDRL…RNGFGFNNLA (109 aa). Residues Asp-274, Asp-276, Arg-305, Phe-308, Asp-310, and Glu-381 each coordinate Cu(2+). A beta stranded membrane pass occupies residues 378 to 403; sequence RYKEGSTDIGISLGFDTSGQFSQVTS. Residues 404-416 are Periplasmic-facing; the sequence is GTGGSLFSTAGRL. The chain crosses the membrane as a beta stranded span at residues 417 to 428; the sequence is QVNQIDLNFGLV. Over 429–471 the chain is Extracellular; sequence TGLPSDAYVDTNGNGKKDDGEATGRGTYLGSGGTAAILRDPAG. Positions 438, 442, 444, 446, and 449 each coordinate Fe(3+). A beta stranded membrane pass occupies residues 472 to 490; that stretch reads NVYRPVFFRFKNATTQFSV. The Periplasmic portion of the chain corresponds to 491-494; that stretch reads GNNP. The chain crosses the membrane as a beta stranded span at residues 495–500; it reads VIVTLG. Over 501-519 the chain is Extracellular; it reads QQQKFYFSDYVFDNNYDGR. Residues Asp-513 and Asn-515 each contribute to the Cu(2+) site. The chain crosses the membrane as a beta stranded span at residues 520–528; sequence GDGFTVTVD. At 529 to 540 the chain is on the periplasmic side; the sequence is GSNVPVIGAWKP. Residues 541-549 form a beta stranded membrane-spanning segment; that stretch reads QIKGVYGSR. Positions 549, 551, 553, and 559 each coordinate Cu(2+). The Extracellular segment spans residues 550–561; the sequence is SGLDGTAEAGYG. Residues 562–571 traverse the membrane as a beta stranded segment; sequence VYYRGVRAQI. The Periplasmic portion of the chain corresponds to 572-577; the sequence is TPVGTL. A beta stranded membrane pass occupies residues 578 to 588; it reads TAGIHYAQEGR. Residues 589 to 601 lie on the Extracellular side of the membrane; it reads DMFGAAQNTTSTP. A beta stranded membrane pass occupies residues 602–615; it reads SDVTTYGADLHGKA. Topologically, residues 616–617 are periplasmic; that stretch reads FG. The chain crosses the membrane as a beta stranded span at residues 618 to 630; the sequence is VELHSEYATSRVR. Ser-622 serves as a coordination point for deinoxanthin. Over 631–638 the chain is Extracellular; it reads PNTANAAV. The chain crosses the membrane as a beta stranded span at residues 639–649; sequence QTSNAFYARVA. At 650–670 the chain is on the periplasmic side; the sequence is TRKDNLAFDLNTPAAKFGNDT. A beta stranded transmembrane segment spans residues 671-682; it reads FGVSLYDLNYRK. Residues 683–753 lie on the Extracellular side of the membrane; it reads IDAGYNNVAG…GTVVATNTKI (71 aa). Gly-716 is a binding site for Cu(2+). Residues 754–766 traverse the membrane as a beta stranded segment; that stretch reads GQMGFGVKAAANL. Residues 767–768 lie on the Periplasmic side of the membrane; sequence GP. A beta stranded membrane pass occupies residues 769–779; the sequence is VAIGGYYDTST. Residues 780–788 lie on the Extracellular side of the membrane; that stretch reads GANGDNANR. Residues 789–798 traverse the membrane as a beta stranded segment; the sequence is MTEAGGSAKV. Over 799-802 the chain is Periplasmic; it reads AYSI. The beta stranded transmembrane segment at 803–814 threads the bilayer; the sequence is FSLRGTYNTLDS. Residues 815-831 lie on the Extracellular side of the membrane; that stretch reads NRPQIYRDAAGTQIIGD. Residues 832–843 traverse the membrane as a beta stranded segment; the sequence is AKVRRYAVQADV. The Periplasmic portion of the chain corresponds to 844 to 848; sequence TPGLG. Residues 849–860 traverse the membrane as a beta stranded segment; it reads LFVGAYYRDVNV. The Extracellular portion of the chain corresponds to 861-931; sequence NGVRSTTDRG…DQSRTATCFT (71 aa). Residues 932-940 traverse the membrane as a beta stranded segment; that stretch reads SYGVEAGHA. Residues 941 to 949 lie on the Periplasmic side of the membrane; it reads GDNANALVK. Residues 950-960 form a beta stranded membrane-spanning segment; sequence DLFFRVGYSRV. Topologically, residues 961 to 976 are extracellular; the sequence is YVPTTATATTGDFSGS. A beta stranded transmembrane segment spans residues 977 to 988; that stretch reads VTYGDARYDRKV. Topologically, residues 989-990 are periplasmic; the sequence is GV. The chain crosses the membrane as a beta stranded span at residues 991–1002; the sequence is ANVRLAGSFSTT. Residues 1003-1014 lie on the Extracellular side of the membrane; the sequence is NTQLDSRPAGTR. Residues 1015–1023 form a beta stranded membrane-spanning segment; it reads GAVGLIVRT. Residues 1024–1032 lie on the Periplasmic side of the membrane; that stretch reads DPLENVPFR. The beta stranded transmembrane segment at 1033–1046 threads the bilayer; it reads PQFNGQVGYYTADN. Over 1047 to 1052 the chain is Extracellular; the sequence is RVAAGN. Residues 1053 to 1066 traverse the membrane as a beta stranded segment; it reads YNANATKYGAGVVL. Topologically, residues 1067-1073 are periplasmic; that stretch reads NDFLLPQ. Residues 1074–1086 traverse the membrane as a beta stranded segment; sequence TKIGVRYDGYMAQ. Residues 1087–1108 are Extracellular-facing; it reads NRQYTPFDGDGTQGYFSDANNN. Residues 1109–1122 traverse the membrane as a beta stranded segment; the sequence is RRTNLNGVYVEGAY. Residues 1123-1124 lie on the Periplasmic side of the membrane; sequence QD. The beta stranded transmembrane segment at 1125 to 1138 threads the bilayer; the sequence is LIFSYGTYTLSQKD. The Extracellular segment spans residues 1139-1153; that stretch reads LNGVEYGSGINNGQP. Residues 1154–1166 traverse the membrane as a beta stranded segment; that stretch reads ARGQTFKISYKVN. A topological domain (periplasmic) is located at residue Phe-1167.

In terms of assembly, homotrimer. Part of a heterooligomeric complex resulting in the main assembly named S-layer deinoxanthin-binding complex (SDBC) which is composed of six different subunits, namely SlpA, DR_2310, DR_0505, DR_A0283, DR_A0282, and DR_A0281.

The protein resides in the cell envelope. It localises to the cell outer membrane. It catalyses the reaction L-arginine(in) = L-arginine(out). The enzyme catalyses L-lysine(in) = L-lysine(out). It carries out the reaction L-glutamate(out) = L-glutamate(in). In terms of biological role, plays an important role in the structural organization and integrity of the cell envelope, bridging the outer membrane to the peptidoglyan layer. Is a highly abundant molecule in the D.radiodurans cell envelope but is not a fundamental component of the S-layer. Binds the carotenoid deinoxanthin, a strong protective antioxidant specific of this bacterium, and could be part of the first lane of defense against UV radiation, especially under desiccation. Appears to be a nonselective channel. Is able to transport charged amino acids such as Lys, Arg and Glu; the large dimension of the pore points toward the physiological importance of the SDBC complex in assisting and allowing the exchange of substances, including nutrients, with the surrounding environment. The protein is Outer membrane protein SlpA of Deinococcus radiodurans (strain ATCC 13939 / DSM 20539 / JCM 16871 / CCUG 27074 / LMG 4051 / NBRC 15346 / NCIMB 9279 / VKM B-1422 / R1).